The chain runs to 343 residues: Dihydroorotate dehydrogenase (quinone) (343 aa).

FMN is bound by residues alanine 58 to lysine 62 and serine 82. Lysine 62 is a substrate binding site. Asparagine 107–phenylalanine 111 contacts substrate. Residues asparagine 136 and asparagine 167 each contribute to the FMN site. Asparagine 167 is a binding site for substrate. The active-site Nucleophile is the serine 170. Residue asparagine 172 participates in substrate binding. FMN contacts are provided by lysine 206 and serine 234. Asparagine 235–threonine 236 contributes to the substrate binding site. Residues glycine 256, glycine 285, and tyrosine 306–serine 307 contribute to the FMN site.

The protein belongs to the dihydroorotate dehydrogenase family. Type 2 subfamily. Monomer. FMN is required as a cofactor.

It localises to the cell membrane. It catalyses the reaction (S)-dihydroorotate + a quinone = orotate + a quinol. It functions in the pathway pyrimidine metabolism; UMP biosynthesis via de novo pathway; orotate from (S)-dihydroorotate (quinone route): step 1/1. Catalyzes the conversion of dihydroorotate to orotate with quinone as electron acceptor. This is Dihydroorotate dehydrogenase (quinone) from Erythrobacter litoralis (strain HTCC2594).